The following is an 85-amino-acid chain: Large ribosomal subunit protein bL27 (85 aa).

A disordered region spans residues 1 to 20; the sequence is MATKKAGGSTRNGRDSEAKR.

The protein belongs to the bacterial ribosomal protein bL27 family.

The chain is Large ribosomal subunit protein bL27 from Actinobacillus succinogenes (strain ATCC 55618 / DSM 22257 / CCUG 43843 / 130Z).